The sequence spans 380 residues: 3-isopropylmalate dehydratase large subunit (380 aa).

Residues C262, C320, and C323 each contribute to the [4Fe-4S] cluster site.

Belongs to the aconitase/IPM isomerase family. LeuC type 2 subfamily. Heterodimer of LeuC and LeuD. It depends on [4Fe-4S] cluster as a cofactor.

The catalysed reaction is (2R,3S)-3-isopropylmalate = (2S)-2-isopropylmalate. It participates in amino-acid biosynthesis; L-leucine biosynthesis; L-leucine from 3-methyl-2-oxobutanoate: step 2/4. Catalyzes the isomerization between 2-isopropylmalate and 3-isopropylmalate, via the formation of 2-isopropylmaleate. In Thermococcus kodakarensis (strain ATCC BAA-918 / JCM 12380 / KOD1) (Pyrococcus kodakaraensis (strain KOD1)), this protein is 3-isopropylmalate dehydratase large subunit.